Reading from the N-terminus, the 108-residue chain is Large ribosomal subunit protein P1B (108 aa).

Low complexity predominate over residues 72–84 (AGSASGAAAGGEA). The interval 72 to 108 (AGSASGAAAGGEAAAEEAAEEEAAEESDDDMGFGLFD) is disordered. Positions 85 to 102 (AAEEAAEEEAAEESDDDM) are enriched in acidic residues.

Belongs to the eukaryotic ribosomal protein P1/P2 family. P1 and P2 exist as dimers at the large ribosomal subunit. Post-translationally, phosphorylated.

Functionally, plays an important role in the elongation step of protein synthesis. The protein is Large ribosomal subunit protein P1B (RPP1B) of Candida albicans (Yeast).